A 296-amino-acid polypeptide reads, in one-letter code: Cytidine deaminase (296 aa).

2 consecutive CMP/dCMP-type deaminase domains span residues 47–167 and 186–296; these read TESE…FGPK and DSSD…VDPI. Residue 88–90 participates in substrate binding; that stretch reads NLE. Residue H101 coordinates Zn(2+). The active-site Proton donor is E103. The Zn(2+) site is built by C128 and C131.

It belongs to the cytidine and deoxycytidylate deaminase family. In terms of assembly, homodimer. Zn(2+) serves as cofactor.

The catalysed reaction is cytidine + H2O + H(+) = uridine + NH4(+). It carries out the reaction 2'-deoxycytidine + H2O + H(+) = 2'-deoxyuridine + NH4(+). Its function is as follows. This enzyme scavenges exogenous and endogenous cytidine and 2'-deoxycytidine for UMP synthesis. The sequence is that of Cytidine deaminase from Shewanella oneidensis (strain ATCC 700550 / JCM 31522 / CIP 106686 / LMG 19005 / NCIMB 14063 / MR-1).